A 116-amino-acid polypeptide reads, in one-letter code: Large ribosomal subunit protein bL19 (116 aa).

The protein belongs to the bacterial ribosomal protein bL19 family.

Its function is as follows. This protein is located at the 30S-50S ribosomal subunit interface and may play a role in the structure and function of the aminoacyl-tRNA binding site. This is Large ribosomal subunit protein bL19 (rplS) from Geobacillus stearothermophilus (Bacillus stearothermophilus).